Here is an 860-residue protein sequence, read N- to C-terminus: Anoctamin-7 (860 aa).

Over 1 to 297 the chain is Cytoplasmic; it reads MLRKQAGEED…YFAWLGFYTG (297 aa). The tract at residues 24 to 50 is disordered; that stretch reads NGCSYGSTAQASEAGKQQVAPSRVGSS. A helical membrane pass occupies residues 298–318; sequence WLLPAAVVGTVVFLAGCFLVF. At 319-362 the chain is on the extracellular side; that stretch reads SDVPTQELCHSSDTFDMCPLCSDCSFWLLSSACTLAQAGRLFDH. Residues 363 to 383 traverse the membrane as a helical segment; the sequence is GGTVFFSLFMALWAVLLLEYW. Topologically, residues 384–441 are cytoplasmic; that stretch reads KRKNATLAYRWDCSDYEDIEERPRPQFAATAPMTALNPITGEDEPYFPEKNRVRRMLA. The chain crosses the membrane as a helical span at residues 442–462; it reads GSVVLLMMVAVVIMCLVSIIL. The Extracellular segment spans residues 463–492; that stretch reads YRAVMAIIVSKSNNAFLSAWASRIASLTGS. A helical transmembrane segment spans residues 493-513; it reads VVNLVFILILSKVYVILAQVL. The Cytoplasmic portion of the chain corresponds to 514 to 530; sequence TRWEMHRTQTAFEDAFT. Residues 531-551 form a helical membrane-spanning segment; the sequence is LKVFIFQFVNFYASPVYIAFF. Topologically, residues 552–652 are extracellular; the sequence is KGRFVGYPGN…FHEYLEMVLQ (101 aa). A helical transmembrane segment spans residues 653 to 673; it reads FGFVTIFVAACPLAPLFALLN. Residues 674 to 701 lie on the Cytoplasmic side of the membrane; the sequence is NWVEIRLDARKFVCEYRRPVAERAQDIG. A helical membrane pass occupies residues 702–722; that stretch reads IWFHILAGLTHLAVISNAFLL. The Extracellular segment spans residues 723–779; sequence AFSSDFLPRVYYSWTRAPDLRGFLNFTLARAPPTFTSAHNRTCRYRAFRDDDGHYSP. N-linked (GlcNAc...) asparagine glycosylation is found at Asn747 and Asn762. The chain crosses the membrane as a helical span at residues 780–800; it reads TYWTLLAIRLAFVIVFEHVVF. The Cytoplasmic portion of the chain corresponds to 801–860; the sequence is STGRFLDLLVPDIPESVEIKVKREYYLAKQALADNEALLGATGVKGEQPPSSEPSLGLPA.

This sequence belongs to the anoctamin family.

The protein resides in the cell membrane. It is found in the endoplasmic reticulum. It carries out the reaction a 1,2-diacyl-sn-glycero-3-phospho-L-serine(in) = a 1,2-diacyl-sn-glycero-3-phospho-L-serine(out). The enzyme catalyses a beta-D-galactosyl-(1&lt;-&gt;1')-N-acylsphing-4-enine(out) = a beta-D-galactosyl-(1&lt;-&gt;1')-N-acylsphing-4-enine(in). It catalyses the reaction a 1,2-diacyl-sn-glycero-3-phosphocholine(in) = a 1,2-diacyl-sn-glycero-3-phosphocholine(out). Has calcium-dependent phospholipid scramblase activity; scrambles phosphatidylserine, phosphatidylcholine and galactosylceramide. Does not exhibit calcium-activated chloride channel (CaCC) activity. May play a role in cell-cell interactions. The protein is Anoctamin-7 (Ano7) of Rattus norvegicus (Rat).